We begin with the raw amino-acid sequence, 201 residues long: Ubiquinone biosynthesis accessory factor UbiJ (201 aa).

In terms of domain architecture, SCP2 spans 15-112; that stretch reads LNTFLYRSPA…QVVQNFVALA (98 aa).

This sequence belongs to the UbiJ family. As to quaternary structure, component of the Ubi complex metabolon, which regroups five ubiquinone biosynthesis proteins (UbiE, UbiF, UbiG, UbiH and UbiI) and two accessory factors (UbiK and the lipid-binding protein UbiJ). Interacts with UbiK and forms a complex composed of 2 UbiK subunits and 1 UbiJ subunit. The UbiK-UbiJ complex interacts with palmitoleic acid.

The protein resides in the cytoplasm. It participates in cofactor biosynthesis; ubiquinone biosynthesis. In terms of biological role, required for ubiquinone (coenzyme Q) biosynthesis under aerobic conditions. Binds hydrophobic ubiquinone biosynthetic intermediates via its SCP2 domain and is essential for the stability of the Ubi complex. May constitute a docking platform where Ubi enzymes assemble and access their SCP2-bound polyprenyl substrates. This is Ubiquinone biosynthesis accessory factor UbiJ from Escherichia coli (strain K12).